The sequence spans 349 residues: S-adenosylmethionine:tRNA ribosyltransferase-isomerase (349 aa).

It belongs to the QueA family. In terms of assembly, monomer.

Its subcellular location is the cytoplasm. It carries out the reaction 7-aminomethyl-7-carbaguanosine(34) in tRNA + S-adenosyl-L-methionine = epoxyqueuosine(34) in tRNA + adenine + L-methionine + 2 H(+). It functions in the pathway tRNA modification; tRNA-queuosine biosynthesis. Its function is as follows. Transfers and isomerizes the ribose moiety from AdoMet to the 7-aminomethyl group of 7-deazaguanine (preQ1-tRNA) to give epoxyqueuosine (oQ-tRNA). This chain is S-adenosylmethionine:tRNA ribosyltransferase-isomerase, found in Pseudomonas putida (strain W619).